We begin with the raw amino-acid sequence, 235 residues long: Glycerol-3-phosphate acyltransferase (235 aa).

Helical transmembrane passes span L4–G24, T56–F76, L94–G114, M124–I144, V152–F172, and F191–L211.

Belongs to the PlsY family. Probably interacts with PlsX.

The protein localises to the cell inner membrane. It carries out the reaction an acyl phosphate + sn-glycerol 3-phosphate = a 1-acyl-sn-glycero-3-phosphate + phosphate. It participates in lipid metabolism; phospholipid metabolism. In terms of biological role, catalyzes the transfer of an acyl group from acyl-phosphate (acyl-PO(4)) to glycerol-3-phosphate (G3P) to form lysophosphatidic acid (LPA). This enzyme utilizes acyl-phosphate as fatty acyl donor, but not acyl-CoA or acyl-ACP. This chain is Glycerol-3-phosphate acyltransferase, found in Chlorobium limicola (strain DSM 245 / NBRC 103803 / 6330).